The sequence spans 144 residues: Maximins 3/H9 type 2 (144 aa).

The first 18 residues, 1-18 (MNFKYIVAVSFLIASAYA), serve as a signal peptide directing secretion. 2 propeptides span residues 19 to 43 (RSVQ…REIR) and 74 to 123 (TAEE…KEKR). Isoleucine amide is present on Ile-143.

It belongs to the bombinin family. Expressed by the skin glands.

Its subcellular location is the secreted. In terms of biological role, maximin-3 shows antibacterial activity against both Gram-positive and Gram-negative bacteria. It also shows antimicrobial activity against the fungus C.albicans, but not against A.flavus nor P.uticale. It has little hemolytic activity. It possess a significant cytotoxicity against tumor cell lines. It possess a significant anti-HIV activity. It shows high spermicidal activity. Maximin-H9 shows antimicrobial activity against bacteria and against the fungus C.albicans. Shows strong hemolytic activity. This Bombina maxima (Giant fire-bellied toad) protein is Maximins 3/H9 type 2.